The sequence spans 889 residues: Exocyst complex component 1 (889 aa).

2 positions are modified to phosphoserine: Ser145 and Ser148. Positions 156–269 form a coiled coil; sequence RAVQKTQHMD…GHVKETMEKI (114 aa). Residue Ser456 is modified to Phosphoserine.

It belongs to the SEC3 family. As to quaternary structure, the exocyst complex is composed of Sec3/Exoc1, Sec5/Exoc2, Sec6/Exoc3, Sec8/Exoc4, Sec10/Exoc5, Sec15/Exoc6, Exo70/Exoc7 and Exo84/Exoc8.

Component of the exocyst complex involved in the docking of exocytic vesicles with fusion sites on the plasma membrane. The protein is Exocyst complex component 1 of Drosophila melanogaster (Fruit fly).